Here is a 572-residue protein sequence, read N- to C-terminus: Golgi apyrase (572 aa).

Over 1-470 (MVRKYGIFID…KHWMRLFPNK (470 aa)) the chain is Lumenal. The Proton acceptor role is filled by E145. Residues 471-491 (LFFILSFIFCLFFLFSLVLFG) form a helical membrane-spanning segment. Topologically, residues 492–572 (YDPKRRQRFK…RERTPRSPFP (81 aa)) are cytoplasmic.

Belongs to the GDA1/CD39 NTPase family. Ca(2+) serves as cofactor. Mg(2+) is required as a cofactor. The cofactor is Mn(2+).

The protein localises to the golgi apparatus. The protein resides in the membrane. It carries out the reaction a ribonucleoside 5'-triphosphate + 2 H2O = a ribonucleoside 5'-phosphate + 2 phosphate + 2 H(+). Its pathway is protein modification; protein glycosylation. Functionally, catalyzes the hydrolysis of phosphoanhydride bonds of nucleoside tri- and di-phosphates. Required for Golgi glycosylation and cell wall integrity. Involved in N-mannosylation of proteins in Golgi. The sequence is that of Golgi apyrase from Schizosaccharomyces pombe (strain 972 / ATCC 24843) (Fission yeast).